We begin with the raw amino-acid sequence, 1557 residues long: MREGRWVTVTESEFEHERRGLEAIRQKLPDGDPWRAWSNFTFTANTGHVREVDLLVVAPGGLCMVELKDWHGSVTSENGTWVQTTPGGRRRTHGNPLHLVNRKAKELAGLLAQPGAKRVWVAEAVCFTDNGLRVRLPAHDQNGVYTVDELVDMLKQAPSDERRRVTAIGSREVAAALKNIGIRKSDAQYKVGPYELERKSFDSGPTWADYLARHSDLPEAARVRIYLSERGSDASLRQSVENAARREAAVLGRFKHPGAVQLKQYFPSGHAAGPALIFDYHPHTQKLDEYLVQYGEKLDILGRMALVRQLAETVRSAHASRIHHRALAARSVLVVPRSRGGKGRAVGEEAAWLTPQLQISDWQIATQRSGDSSQGQGMTRFAPTALSAMHLADDADAYLAPELTALNPDPVYLDVYGLGVLTYLLVTGKAPAASQAELLARLEAGEGLRPSSLVDGLSEDVDELVQAATAYRPGQRLSSVDEFLELLEVVEDSLTAPAAALDGPAEDETGASADKDPLEVVAGDLLAGRWEVRRRLGTGSTSRAFLVRDLEAETRRTRPLAVLKVALSDSRGEILVREAEAMRRLRPHSGIIRLAEPEPLHIGGRTVLALEYVGDERDDDGPGAEGATRPRRREETVARQLREHGRLPVDQLEAYGDYLFGAVDFLEGEGIWHRDIKPDNIAVRIRPNRTRELVLIDFSLAGYPAKNTDAGTDGYLDPFVDVITRGSYDSHAERYAVAVTLHQMASGELPKWGDGSVLPRMTDPKEWPYPTIAAEAFDPAVRDGLVAFFQKALHRDAGKRFPELKPMRDAWRKVFLDASQTVPSSHRTRPAAPADGAAPAEGAAAGIADAEPETAEQQRDRLAAEVTRDTPLTVSGLTPAAQSFLYGLGITTVGELLDYSRRKLVNAPGLGAKTRNEVQQRQREWGERLREAPVSPLTPKGRAEAKEELEQLTAAESALVGQLATGESAGALSARTLRSVSLDTLATVLVPAVNNNGSNRNKAEMVRLLLRLPDEHGVLPGIGVWPKQKDVADALGLSHGRIPQMLKDERKRWKAEPAVQALRDEIIELLASMGRVASAVEIADALAVRRGTHLAGREQRRAMALAAVRAVVEVEQLVPQEVEFQHQPNRKATDESLGAGLLALDVREDDAPDTPTAPGLLDYATRLGKTADRLARLDTLPTAATVLAELGALTVPPGAVDWDERRMVELAAAASVNAAATPRLEIYPRDLSLVRALRLTQAGLVRWIPGVPEGRQPGLTGEDVHERVRARFPELVVPDGRGGTAHELPTAGPLTKALRDAGFELSLSMREDTGTLRYLPTRVDEASSYLTTGAWRQSTRTGTVTRYADDPQLAGAVRAEERLLASAHRDGYRVLTVRQQLVRDAVRELGAERLGGQAVSVTELFLEALHGQVTPGTKPTWETLLKADAAEPGSKGAVRFAEYARTAWGSVEPRIAELLGDGGGGAGPVLLTEAGVFARYDAMGVLDRLASAARRGGRGLWLLVPQSDPSREPRLGQVAVPYQAGLGEWIQLPDTWVGNRHRGSGEVVASGVEGDAK.

The NERD domain maps to 12–130 (SEFEHERRGL…VAEAVCFTDN (119 aa)). Protein kinase domains lie at 195–490 (ELER…LEVV) and 530–816 (WEVR…KVFL). ATP contacts are provided by residues 536–544 (LGTGSTSRA) and Lys564. Disordered stretches follow at residues 615–634 (DERDDDGPGAEGATRPRRRE) and 821–861 (TVPS…QRDR). The segment covering 830 to 849 (PAAPADGAAPAEGAAAGIAD) has biased composition (low complexity).

This sequence belongs to the protein kinase superfamily. Ser/Thr protein kinase family.

In terms of biological role, BREX systems (bacteriophage exclusion) provide immunity against bacteriophage. Part of a type 2 BREX system. Previously called the phage growth limitation (Pgl) system, it confers protection against bacteriophage phiC31. The bacteria allows one cycle of phage infection, but subsequent cycles are impaired, protecting the original bacterial colony. The system undergoes high rates (10(-3) to 10(-4)) of phase reversion, i.e. loss and regain of phiC31 resistance. When the pglW-pglX-pglY-pglZ genes are transformed into a susceptible S.lividans (strain 1326) they confer resistance to infection by phage phiC31 and phiBT1; all 4 genes are necessary. The proteins has kinase domains and might bind DNA. Autophosphorylates when synthesized in vitro, cannot be expressed in E.coli. The sequence is that of Probable kinase PglW from Streptomyces coelicolor (strain ATCC BAA-471 / A3(2) / M145).